Consider the following 241-residue polypeptide: Small ribosomal subunit protein bS6 (241 aa).

Basic residues predominate over residues 97–108 (KPKIRERNRKYT). The disordered stretch occupies residues 97–241 (KPKIRERNRK…YNNKKPQSSN (145 aa)). Residues 109 to 118 (LRRDRFDKPN) are compositionally biased toward basic and acidic residues. Low complexity-rich tracts occupy residues 130 to 151 (QDQQ…QASQ) and 161 to 182 (DDFQ…NQSG). Over residues 183 to 193 (YHRENNRHNQE) the composition is skewed to basic and acidic residues. Residues 194–210 (NMHQNNKNHQNQTSQTQ) are compositionally biased toward low complexity.

The protein belongs to the bacterial ribosomal protein bS6 family.

Binds together with bS18 to 16S ribosomal RNA. The protein is Small ribosomal subunit protein bS6 of Mesomycoplasma hyopneumoniae (strain J / ATCC 25934 / NCTC 10110) (Mycoplasma hyopneumoniae).